The chain runs to 305 residues: Pseudouridine-5'-phosphate glycosidase (305 aa).

Glu-28 serves as the catalytic Proton donor. Substrate contacts are provided by Lys-89 and Val-109. Asp-141 lines the Mn(2+) pocket. 143 to 145 (SAD) serves as a coordination point for substrate. Catalysis depends on Lys-162, which acts as the Nucleophile.

Belongs to the pseudouridine-5'-phosphate glycosidase family. Homotrimer. It depends on Mn(2+) as a cofactor.

It carries out the reaction D-ribose 5-phosphate + uracil = psi-UMP + H2O. Functionally, catalyzes the reversible cleavage of pseudouridine 5'-phosphate (PsiMP) to ribose 5-phosphate and uracil. Functions biologically in the cleavage direction, as part of a pseudouridine degradation pathway. This Dinoroseobacter shibae (strain DSM 16493 / NCIMB 14021 / DFL 12) protein is Pseudouridine-5'-phosphate glycosidase.